The primary structure comprises 550 residues: CTP synthase (550 aa).

The amidoligase domain stretch occupies residues 1 to 270 (MTKFVFVTGG…DRLICEELRL (270 aa)). Residue Ser-13 participates in CTP binding. Ser-13 lines the UTP pocket. Residues 14–19 (SLGKGI) and Asp-71 each bind ATP. Asp-71 and Glu-144 together coordinate Mg(2+). CTP contacts are provided by residues 151–153 (DIE), 191–196 (KTKPTQ), and Lys-227. Residues 191 to 196 (KTKPTQ) and Lys-227 each bind UTP. Residues 295 to 547 (TIGMVGKYVD…VEAALAGQQR (253 aa)) form the Glutamine amidotransferase type-1 domain. Residue Gly-356 coordinates L-glutamine. Cys-383 functions as the Nucleophile; for glutamine hydrolysis in the catalytic mechanism. L-glutamine contacts are provided by residues 384-387 (LGMQ), Glu-407, and Arg-473. Residues His-520 and Glu-522 contribute to the active site.

Belongs to the CTP synthase family. In terms of assembly, homotetramer.

It catalyses the reaction UTP + L-glutamine + ATP + H2O = CTP + L-glutamate + ADP + phosphate + 2 H(+). It carries out the reaction L-glutamine + H2O = L-glutamate + NH4(+). The catalysed reaction is UTP + NH4(+) + ATP = CTP + ADP + phosphate + 2 H(+). Its pathway is pyrimidine metabolism; CTP biosynthesis via de novo pathway; CTP from UDP: step 2/2. Its activity is regulated as follows. Allosterically activated by GTP, when glutamine is the substrate; GTP has no effect on the reaction when ammonia is the substrate. The allosteric effector GTP functions by stabilizing the protein conformation that binds the tetrahedral intermediate(s) formed during glutamine hydrolysis. Inhibited by the product CTP, via allosteric rather than competitive inhibition. In terms of biological role, catalyzes the ATP-dependent amination of UTP to CTP with either L-glutamine or ammonia as the source of nitrogen. Regulates intracellular CTP levels through interactions with the four ribonucleotide triphosphates. This chain is CTP synthase, found in Cupriavidus pinatubonensis (strain JMP 134 / LMG 1197) (Cupriavidus necator (strain JMP 134)).